The sequence spans 144 residues: Cell division protein SepF (144 aa).

This sequence belongs to the SepF family. Homodimer. Interacts with FtsZ.

It is found in the cytoplasm. Cell division protein that is part of the divisome complex and is recruited early to the Z-ring. Probably stimulates Z-ring formation, perhaps through the cross-linking of FtsZ protofilaments. Its function overlaps with FtsA. This Geobacillus sp. (strain WCH70) protein is Cell division protein SepF.